The following is a 387-amino-acid chain: Exodeoxyribonuclease 7 large subunit (387 aa).

Belongs to the XseA family. In terms of assembly, heterooligomer composed of large and small subunits.

Its subcellular location is the cytoplasm. The enzyme catalyses Exonucleolytic cleavage in either 5'- to 3'- or 3'- to 5'-direction to yield nucleoside 5'-phosphates.. Bidirectionally degrades single-stranded DNA into large acid-insoluble oligonucleotides, which are then degraded further into small acid-soluble oligonucleotides. The chain is Exodeoxyribonuclease 7 large subunit from Synechococcus sp. (strain CC9902).